A 160-amino-acid polypeptide reads, in one-letter code: Cytochrome b6-f complex subunit 4 (160 aa).

3 helical membrane passes run 36–56 (LLYIFPVVILGTIACNVGLAV), 95–115 (LLGVLLMVSVPAGLLTVPFLE), and 131–151 (TVFLIGTAVALWLGIGATLPI).

It belongs to the cytochrome b family. PetD subfamily. In terms of assembly, the 4 large subunits of the cytochrome b6-f complex are cytochrome b6, subunit IV (17 kDa polypeptide, petD), cytochrome f and the Rieske protein, while the 4 small subunits are petG, petL, petM and petN. The complex functions as a dimer.

It is found in the plastid. It localises to the chloroplast thylakoid membrane. Component of the cytochrome b6-f complex, which mediates electron transfer between photosystem II (PSII) and photosystem I (PSI), cyclic electron flow around PSI, and state transitions. The chain is Cytochrome b6-f complex subunit 4 from Solanum tuberosum (Potato).